The sequence spans 975 residues: Exocyst complex component 4 (975 aa).

At Ala-2 the chain carries N-acetylalanine. Position 9 is an N6-acetyllysine (Lys-9). At Ser-32 the chain carries Phosphoserine. Positions 32-114 form a coiled coil; the sequence is STSDDVEDRE…HCKRDELRKL (83 aa). Basic and acidic residues predominate over residues 211–224; the sequence is RNKEKGKMSSHGKD. Positions 211-230 are disordered; the sequence is RNKEKGKMSSHGKDPSPGPL. A Phosphoserine modification is found at Ser-226. The residue at position 238 (Thr-238) is a Phosphothreonine. Ser-469 carries the post-translational modification Phosphoserine.

It belongs to the SEC8 family. In terms of assembly, the exocyst complex is composed of EXOC1, EXOC2, EXOC3, EXOC4, EXOC5, EXOC6, EXOC7 and EXOC8. Interacts with BIRC6/bruce. Interacts with MYRIP. Interacts with SH3BP1; required for the localization of both SH3BP1 and the exocyst to the leading edge of migrating cells. Interacts with SLC6A9. In terms of tissue distribution, expressed in the striatum (at protein level).

It localises to the midbody. The protein resides in the midbody ring. Its subcellular location is the cell projection. It is found in the cytoplasm. The protein localises to the cytoskeleton. It localises to the microtubule organizing center. The protein resides in the centrosome. Its function is as follows. Component of the exocyst complex involved in the docking of exocytic vesicles with fusion sites on the plasma membrane. In Mus musculus (Mouse), this protein is Exocyst complex component 4 (Exoc4).